We begin with the raw amino-acid sequence, 96 residues long: Pyrimidine/purine nucleoside phosphorylase (96 aa).

This sequence belongs to the nucleoside phosphorylase PpnP family.

The enzyme catalyses a purine D-ribonucleoside + phosphate = a purine nucleobase + alpha-D-ribose 1-phosphate. It catalyses the reaction adenosine + phosphate = alpha-D-ribose 1-phosphate + adenine. It carries out the reaction cytidine + phosphate = cytosine + alpha-D-ribose 1-phosphate. The catalysed reaction is guanosine + phosphate = alpha-D-ribose 1-phosphate + guanine. The enzyme catalyses inosine + phosphate = alpha-D-ribose 1-phosphate + hypoxanthine. It catalyses the reaction thymidine + phosphate = 2-deoxy-alpha-D-ribose 1-phosphate + thymine. It carries out the reaction uridine + phosphate = alpha-D-ribose 1-phosphate + uracil. The catalysed reaction is xanthosine + phosphate = alpha-D-ribose 1-phosphate + xanthine. Functionally, catalyzes the phosphorolysis of diverse nucleosides, yielding D-ribose 1-phosphate and the respective free bases. Can use uridine, adenosine, guanosine, cytidine, thymidine, inosine and xanthosine as substrates. Also catalyzes the reverse reactions. This Erwinia tasmaniensis (strain DSM 17950 / CFBP 7177 / CIP 109463 / NCPPB 4357 / Et1/99) protein is Pyrimidine/purine nucleoside phosphorylase.